The chain runs to 155 residues: Small ribosomal subunit protein uS7 (155 aa).

This sequence belongs to the universal ribosomal protein uS7 family. As to quaternary structure, part of the 30S ribosomal subunit. Contacts proteins S9 and S11.

One of the primary rRNA binding proteins, it binds directly to 16S rRNA where it nucleates assembly of the head domain of the 30S subunit. Is located at the subunit interface close to the decoding center, probably blocks exit of the E-site tRNA. The sequence is that of Small ribosomal subunit protein uS7 from Amoebophilus asiaticus (strain 5a2).